A 124-amino-acid chain; its full sequence is IHFFYLGLCLLTLTSSAAAGPETLCGAELVDALQFVCGDRGFYFSKPTGYGSSSRRLHHKGIVDECCFQSCDLRRLEMYCAPIKPPKSARSVRAQRHTDMPKAQKEVHLKNTSRGNTGNRNYRM.

Residues 1-19 constitute a propeptide that is removed on maturation; it reads IHFFYLGLCLLTLTSSAAA. The b stretch occupies residues 20-48; the sequence is GPETLCGAELVDALQFVCGDRGFYFSKPT. 3 disulfide bridges follow: Cys25/Cys67, Cys37/Cys80, and Cys66/Cys71. The tract at residues 49–60 is c; that stretch reads GYGSSSRRLHHK. The a stretch occupies residues 61-81; it reads GIVDECCFQSCDLRRLEMYCA. The d stretch occupies residues 82–89; it reads PIKPPKSA. The tract at residues 86–124 is disordered; it reads PKSARSVRAQRHTDMPKAQKEVHLKNTSRGNTGNRNYRM. Residues 90–124 constitute a propeptide, e peptide; the sequence is RSVRAQRHTDMPKAQKEVHLKNTSRGNTGNRNYRM. The segment covering 96-109 has biased composition (basic and acidic residues); the sequence is RHTDMPKAQKEVHL. Residues 110–124 show a composition bias toward polar residues; that stretch reads KNTSRGNTGNRNYRM.

The protein belongs to the insulin family.

Its subcellular location is the secreted. In terms of biological role, the insulin-like growth factors, isolated from plasma, are structurally and functionally related to insulin but have a much higher growth-promoting activity. Acts as a ligand for IGF1R. Binds to the alpha subunit of IGF1R, leading to the activation of the intrinsic tyrosine kinase activity which autophosphorylates tyrosine residues in the beta subunit thus initiatiating a cascade of down-stream signaling events leading to activation of the PI3K-AKT/PKB and the Ras-MAPK pathways. Binds to integrins. Its binding to integrins and subsequent ternary complex formation with integrins and IGFR1 are essential for IGF1 signaling. The chain is Insulin-like growth factor 1 from Coturnix japonica (Japanese quail).